The following is a 492-amino-acid chain: Glutamyl-tRNA(Gln) amidotransferase subunit A (492 aa).

Catalysis depends on charge relay system residues Lys-79 and Ser-154. The Acyl-ester intermediate role is filled by Ser-178.

It belongs to the amidase family. GatA subfamily. Heterotrimer of A, B and C subunits.

The enzyme catalyses L-glutamyl-tRNA(Gln) + L-glutamine + ATP + H2O = L-glutaminyl-tRNA(Gln) + L-glutamate + ADP + phosphate + H(+). Allows the formation of correctly charged Gln-tRNA(Gln) through the transamidation of misacylated Glu-tRNA(Gln) in organisms which lack glutaminyl-tRNA synthetase. The reaction takes place in the presence of glutamine and ATP through an activated gamma-phospho-Glu-tRNA(Gln). This is Glutamyl-tRNA(Gln) amidotransferase subunit A from Acinetobacter baumannii (strain AB0057).